A 569-amino-acid chain; its full sequence is Endonuclease/exonuclease/phosphatase family domain-containing protein 1 (569 aa).

Residues 1–20 (MGSTLGCHRSIPRDPSDLSH) form a disordered region. The N-myristoyl glycine moiety is linked to residue glycine 2. Positions 11 to 20 (IPRDPSDLSH) are enriched in basic and acidic residues. Phosphoserine occurs at positions 16, 21, and 25. In terms of domain architecture, HhH spans 38–67 (ERLNINTATEEELMTLPGVTRAVARSIVEY). Residues serine 106, serine 110, serine 160, and serine 173 each carry the phosphoserine modification. The segment at 200 to 224 (SRPPSTHTNGGLTFTAKPHPSPTSL) is disordered. Polar residues predominate over residues 202–211 (PPSTHTNGGL). The residue at position 265 (threonine 265) is a Phosphothreonine. The segment at 548–569 (EVPRNGNGVTLEPSEANVKHER) is disordered.

This chain is Endonuclease/exonuclease/phosphatase family domain-containing protein 1 (Eepd1), found in Rattus norvegicus (Rat).